The following is a 443-amino-acid chain: Proline--tRNA ligase (443 aa).

It belongs to the class-II aminoacyl-tRNA synthetase family. ProS type 2 subfamily. As to quaternary structure, homodimer.

The protein resides in the cytoplasm. It carries out the reaction tRNA(Pro) + L-proline + ATP = L-prolyl-tRNA(Pro) + AMP + diphosphate. In terms of biological role, catalyzes the attachment of proline to tRNA(Pro) in a two-step reaction: proline is first activated by ATP to form Pro-AMP and then transferred to the acceptor end of tRNA(Pro). The polypeptide is Proline--tRNA ligase (Caulobacter vibrioides (strain ATCC 19089 / CIP 103742 / CB 15) (Caulobacter crescentus)).